The primary structure comprises 477 residues: Glycogen synthase (477 aa).

Lysine 15 is an ADP-alpha-D-glucose binding site.

The protein belongs to the glycosyltransferase 1 family. Bacterial/plant glycogen synthase subfamily.

It catalyses the reaction [(1-&gt;4)-alpha-D-glucosyl](n) + ADP-alpha-D-glucose = [(1-&gt;4)-alpha-D-glucosyl](n+1) + ADP + H(+). Its pathway is glycan biosynthesis; glycogen biosynthesis. In terms of biological role, synthesizes alpha-1,4-glucan chains using ADP-glucose. The polypeptide is Glycogen synthase (Klebsiella pneumoniae (strain 342)).